Here is a 448-residue protein sequence, read N- to C-terminus: TRAF family member-associated NF-kappa-B activator (448 aa).

The segment at 35–65 is necessary for interaction with ZC3H12A; the sequence is MDKNIGEQLNRAYEAFRQACMDRDSAVRELQ. Positions 60–98 form a coiled coil; that stretch reads AVRELQQKQTENYEQRIREQQEQLSFQQNLIDRLKSQLL. Residues 105 to 224 are necessary for interaction with TRAF6; that stretch reads DNSYGYVPLL…QCTDKTEKQE (120 aa). Residues 166–205 are interaction with TBK1 and IKBKE; sequence HERDNIEKTFWDLKEEFHRICLLAKAQKDHLSKLNIPDIA. Positions 205–224 are TRAF family member interaction; that stretch reads ATDTQCSVPIQCTDKTEKQE. A Phosphoserine modification is found at Ser211. Phosphothreonine is present on Thr246. Phosphoserine is present on residues Ser258, Ser261, Ser377, and Ser380. The segment at 416–443 adopts a UBZ1-type zinc-finger fold; the sequence is PLVCEFCQELFPPSITSRGDFLRHLNTH. Residues Cys419, Cys422, His439, and His443 each contribute to the Zn(2+) site.

As to quaternary structure, homodimer. Found in a deubiquitination complex with TANK, USP10 and ZC3H12A; this complex inhibits genotoxic stress- or interleukin-1-beta-mediated NF-kappaB activation by promoting IKBKG or TRAF6 deubiquitination. Interacts with IKBKG; this interaction increases in response to DNA damage. Interacts with TRAF6; this interaction increases in response to DNA damage and recruits USP10 to the ubiquitinated TRAF6. Interacts with USP10; this interaction increases in response to DNA damage. Interacts with TBK1 and IKBKE. Also interacts with TRAF1, TRAF2, and TRAF3 by binding to their TRAF-C domains; the interaction with TRAF2 is disrupted by the phosphorylation of TANK by IKBKE. Interacts more strongly with TRAF1 and TRAF2 than TRAF3. Part of a ternary complex consisting of TANK, IKBKB and IKBKG. Interacts with IKBKG; the interaction is enhanced by IKBKE and TBK1. In terms of tissue distribution, heart, brain, spleen, lung, liver, skeletal muscle, kidney and testis.

Its subcellular location is the cytoplasm. Its function is as follows. Adapter protein involved in I-kappa-B-kinase (IKK) regulation which constitutively binds TBK1 and IKBKE playing a role in antiviral innate immunity. Acts as a regulator of TRAF function by maintaining them in a latent state. Blocks TRAF2 binding to LMP1 and inhibits LMP1-mediated NF-kappa-B activation. Negatively regulates NF-kappaB signaling and cell survival upon DNA damage. Plays a role as an adapter to assemble ZC3H12A, USP10 in a deubiquitination complex which plays a negative feedback response to attenuate NF-kappaB activation through the deubiquitination of IKBKG or TRAF6 in response to interleukin-1-beta (IL1B) stimulation or upon DNA damage. Promotes UBP10-induced deubiquitination of TRAF6 in response to DNA damage. May control negatively TRAF2-mediated NF-kappa-B activation signaled by CD40, TNFR1 and TNFR2. Essential for the efficient induction of IRF-dependent transcription following infection with Sendai virus. This Mus musculus (Mouse) protein is TRAF family member-associated NF-kappa-B activator (Tank).